We begin with the raw amino-acid sequence, 105 residues long: NADH-quinone oxidoreductase subunit K (105 aa).

The next 3 membrane-spanning stretches (helical) occupy residues 9-29 (PNYYLVLAAVLFTIGAAGVLV), 34-54 (IVLFMCVELMLNAANLTLVTF), and 65-85 (IMAFFVMVVAAAEVVVGLAII).

The protein belongs to the complex I subunit 4L family. NDH-1 is composed of 14 different subunits. Subunits NuoA, H, J, K, L, M, N constitute the membrane sector of the complex.

It localises to the cell membrane. It carries out the reaction a quinone + NADH + 5 H(+)(in) = a quinol + NAD(+) + 4 H(+)(out). Functionally, NDH-1 shuttles electrons from NADH, via FMN and iron-sulfur (Fe-S) centers, to quinones in the respiratory chain. The immediate electron acceptor for the enzyme in this species is believed to be a menaquinone. Couples the redox reaction to proton translocation (for every two electrons transferred, four hydrogen ions are translocated across the cytoplasmic membrane), and thus conserves the redox energy in a proton gradient. The polypeptide is NADH-quinone oxidoreductase subunit K (Salinispora tropica (strain ATCC BAA-916 / DSM 44818 / JCM 13857 / NBRC 105044 / CNB-440)).